The sequence spans 1128 residues: Nck-associated protein 1 (1128 aa).

At Ser2 the chain carries N-acetylserine. Positions 640-665 (AVNKKSKKQTGKKGEPEREKPGVESM) are disordered. Over residues 651–665 (KKGEPEREKPGVESM) the composition is skewed to basic and acidic residues. Residues 995–1015 (IACLLMVFVAVSLPTLASNVM) traverse the membrane as a helical segment.

This sequence belongs to the HEM-1/HEM-2 family. As to quaternary structure, component of the WAVE1 complex composed of ABI2, CYFIP1 or CYFIP2, BRK1, NCKAP1 and WASF1/WAVE1. Within the complex, a heterodimer containing NCKAP1 and CYFIP1 interacts with a heterotrimer formed by WAVE1, ABI2 and BRK1. Component of the WAVE2 complex composed of ABI1, CYFIP1/SRA1, NCKAP1/NAP1 and WASF2/WAVE2. CYFIP2 binds to activated RAC1 which causes the complex to dissociate, releasing activated WASF1. The complex can also be activated by NCK1. Associates preferentially with the first SH3 domain of NCK. Interacts with NYAP1, NYAP2 and MYO16. Interacts with TMEM132D. In terms of assembly, (Microbial infection) Interacts with human cytomegalovirus protein UL135. In terms of tissue distribution, expressed in all tissues examined except peripheral blood leukocytes, with highest expression in brain, heart, and skeletal muscle. Expressed in cells of various brain regions including Purkinje cells and dentate nucleus of the cerebellum, CA4 region and dentate gyrus of the hippocampus, and in frontal gray and white matter.

The protein localises to the cell membrane. It localises to the cell projection. It is found in the lamellipodium membrane. In terms of biological role, part of the WAVE complex that regulates lamellipodia formation. The WAVE complex regulates actin filament reorganization via its interaction with the Arp2/3 complex. Actin remodeling activity is regulated by RAC1. As component of the WAVE1 complex, required for BDNF-NTRK2 endocytic trafficking and signaling from early endosomes. The chain is Nck-associated protein 1 (NCKAP1) from Homo sapiens (Human).